Here is a 299-residue protein sequence, read N- to C-terminus: 21S rRNA pseudouridine(2819) synthase (299 aa).

The active site involves Asp-106.

Belongs to the pseudouridine synthase RluA family.

It localises to the mitochondrion. The catalysed reaction is uridine(2819) in 21S rRNA = pseudouridine(2819) in 21S rRNA. In terms of biological role, pseudouridylate synthase responsible for the pseudouridine-2819 formation in mitochondrial 21S rRNA. May modulate the efficiency or the fidelity of the mitochondrial translation machinery. This chain is 21S rRNA pseudouridine(2819) synthase (PUS5), found in Kluyveromyces lactis (strain ATCC 8585 / CBS 2359 / DSM 70799 / NBRC 1267 / NRRL Y-1140 / WM37) (Yeast).